A 104-amino-acid polypeptide reads, in one-letter code: Large ribosomal subunit protein bL21 (104 aa).

It belongs to the bacterial ribosomal protein bL21 family. As to quaternary structure, part of the 50S ribosomal subunit. Contacts protein L20.

This protein binds to 23S rRNA in the presence of protein L20. The protein is Large ribosomal subunit protein bL21 of Clostridium botulinum (strain ATCC 19397 / Type A).